The sequence spans 463 residues: Putative glycine--tRNA ligase, cytoplasmic (463 aa).

Positions 25–54 (TLEDSHAAKPETNAAIELPNKSKPEKSAVE) are disordered. Residues 44–54 (NKSKPEKSAVE) are compositionally biased toward basic and acidic residues. The substrate site is built by R153 and E239. ATP-binding positions include 271–273 (RNE) and 281–286 (LRTREF). Substrate is bound by residues 286–290 (FTLAE) and N376. 398 to 399 (EC) serves as a coordination point for ATP.

Belongs to the class-II aminoacyl-tRNA synthetase family. Homodimer.

It localises to the cytoplasm. The enzyme catalyses tRNA(Gly) + glycine + ATP = glycyl-tRNA(Gly) + AMP + diphosphate. Its function is as follows. Catalyzes the attachment of glycine to tRNA(Gly). Is also able produce diadenosine tetraphosphate (Ap4A), a universal pleiotropic signaling molecule needed for cell regulation pathways, by direct condensation of 2 ATPs. This chain is Putative glycine--tRNA ligase, cytoplasmic, found in Arabidopsis thaliana (Mouse-ear cress).